The sequence spans 340 residues: DNA-directed RNA polymerase subunit alpha (340 aa).

An alpha N-terminal domain (alpha-NTD) region spans residues 1 to 238 (MADTFVAKNW…EQLTVFVNFD (238 aa)). The tract at residues 253-340 (AKLNENLFRS…QAPAPAQPKA (88 aa)) is alpha C-terminal domain (alpha-CTD).

Belongs to the RNA polymerase alpha chain family. In terms of assembly, homodimer. The RNAP catalytic core consists of 2 alpha, 1 beta, 1 beta' and 1 omega subunit. When a sigma factor is associated with the core the holoenzyme is formed, which can initiate transcription.

The catalysed reaction is RNA(n) + a ribonucleoside 5'-triphosphate = RNA(n+1) + diphosphate. Functionally, DNA-dependent RNA polymerase catalyzes the transcription of DNA into RNA using the four ribonucleoside triphosphates as substrates. The sequence is that of DNA-directed RNA polymerase subunit alpha from Myxococcus xanthus (strain DK1622).